The sequence spans 20 residues: Phospholipase A2 D5 (20 aa).

Ca(2+) is required as a cofactor. Contains seven disulfide bonds. In terms of tissue distribution, expressed by the venom gland.

It is found in the secreted. The catalysed reaction is a 1,2-diacyl-sn-glycero-3-phosphocholine + H2O = a 1-acyl-sn-glycero-3-phosphocholine + a fatty acid + H(+). Functionally, PLA2 catalyzes the calcium-dependent hydrolysis of the 2-acyl groups in 3-sn-phosphoglycerides. This chain is Phospholipase A2 D5, found in Micrurus pyrrhocryptus (Coral snake).